Here is a 307-residue protein sequence, read N- to C-terminus: Small ribosomal subunit biogenesis GTPase RsgA (307 aa).

In terms of domain architecture, CP-type G spans 85–242 (RQDAWKTKLI…LIDSPGLQEF (158 aa)). GTP is bound by residues 135-138 (NKAD) and 184-192 (GQSGMGKST). The Zn(2+) site is built by cysteine 266, cysteine 271, histidine 273, and cysteine 279.

It belongs to the TRAFAC class YlqF/YawG GTPase family. RsgA subfamily. Monomer. Associates with 30S ribosomal subunit, binds 16S rRNA. It depends on Zn(2+) as a cofactor.

It is found in the cytoplasm. Its function is as follows. One of several proteins that assist in the late maturation steps of the functional core of the 30S ribosomal subunit. Helps release RbfA from mature subunits. May play a role in the assembly of ribosomal proteins into the subunit. Circularly permuted GTPase that catalyzes slow GTP hydrolysis, GTPase activity is stimulated by the 30S ribosomal subunit. The chain is Small ribosomal subunit biogenesis GTPase RsgA from Neisseria meningitidis serogroup C (strain 053442).